Here is an 845-residue protein sequence, read N- to C-terminus: Protein TSD2 (845 aa).

The disordered stretch occupies residues 193 to 283 (DVDSDSESDS…SASATRLTNA (91 aa)). Basic and acidic residues-rich tracts occupy residues 202-212 (SDSHSDSHSDS) and 230-242 (ARSHDERQRDGSG). The segment covering 243 to 272 (GKRKRGSHSPLSRRRQRHKQGQRHKPRHRS) has biased composition (basic residues).

Belongs to the CDC45 family.

It is found in the nucleus. Its function is as follows. Temperature-sensitive protein required for DNA synthesis. May be a transcription factor that regulates the level or influences the stability of DNA polymerases or auxiliary proteins. This Mycosarcoma maydis (Corn smut fungus) protein is Protein TSD2 (TSD2).